A 578-amino-acid polypeptide reads, in one-letter code: Nuclear receptor subfamily 1 group D member 2 (578 aa).

The interval 1–60 (MELNAGGVIAYISSSSSASSPASCHSEGSENSFQSSSSSVPSSPNSSNCDANGNPKNTDV) is required for phosphorylation by CSNK1E and cytoplasmic localization. The modulating stretch occupies residues 1 to 99 (MELNAGGVIA…HSGMTKFSGM (99 aa)). Positions 13–47 (SSSSSASSPASCHSEGSENSFQSSSSSVPSSPNSS) are enriched in low complexity. The interval 13–89 (SSSSSASSPA…KPGAPGMTKS (77 aa)) is disordered. Position 46 is a phosphoserine; by GSK3-beta (Ser-46). The segment covering 48–61 (NCDANGNPKNTDVS) has biased composition (polar residues). Positions 100–176 (VLLCKVCGDV…VGMSRDAVRF (77 aa)) form a DNA-binding region, nuclear receptor. 2 consecutive NR C4-type zinc fingers follow at residues 103–123 (CKVC…CEGC) and 140–164 (CLKN…FKKC). Lys-162 and Lys-163 each carry N6-acetyllysine; by KAT5. A disordered region spans residues 214–247 (EPHEQSVPPAQEQLRPKPQLEQENIKSTPPPSDF). The segment covering 227 to 237 (LRPKPQLEQEN) has biased composition (basic and acidic residues). Disulfide bonds link Cys-336-Cys-342 and Cys-373-Cys-383. The NR LBD domain maps to 368 to 578 (RNSYLCSTGG…EELLAFKVHP (211 aa)). Residues Cys-383 and His-567 each contribute to the heme site. Residues 396–578 (SGHEIWEEFS…EELLAFKVHP (183 aa)) form an interaction with ZNHIT1 region.

Belongs to the nuclear hormone receptor family. NR1 subfamily. Binds DNA as a monomer or a homodimer. Interacts with NCOA5 coactivator, leading to a strong increase of transcription of target genes. Interacts (via N-terminus) with KAT5. Interacts (via C-terminus) with HDAC1. Interacts with ZNHIT1. Interacts with SIAH2. Deacetylated by HDAC1. Acetylation and deacetylation regulate its transcriptional regulatory activity. In terms of processing, under more reducing intracellular redox conditions, Cys-383 is in its heme-bound state, which is optimal for recruitment of the NCOR1/HDAC3 corepressor complex and repression of target genes. When subjected to oxidative stress conditions, Cys-383 undergoes oxidation to form a disulfide bridge with Cys-373, also triggering a ligand switch that results in release of bound heme and derepression of target genes. Post-translationally, ubiquitinated by SIAH2; leading to its proteasomal degradation. Phosphorylated by CSNK1E; phosphorylation enhances its cytoplasmic localization.

The protein localises to the nucleus. It is found in the cytoplasm. The heme-bound form can bind gaseous signaling molecules such as CO and nitric oxide (NO) and NO can reverse its transcriptional repressor activity. Transcriptional repressor which coordinates circadian rhythm and metabolic pathways in a heme-dependent manner. Integral component of the complex transcription machinery that governs circadian rhythmicity and forms a critical negative limb of the circadian clock by directly repressing the expression of core clock components BMAL1 and CLOCK. Also regulates genes involved in metabolic functions, including lipid metabolism and the inflammatory response. Acts as a receptor for heme which stimulates its interaction with the NCOR1/HDAC3 corepressor complex, enhancing transcriptional repression. Recognizes two classes of DNA response elements within the promoter of its target genes and can bind to DNA as either monomers or homodimers, depending on the nature of the response element. Binds as a monomer to a response element composed of the consensus half-site motif 5'-[A/G]GGTCA-3' preceded by an A/T-rich 5' sequence (RevRE), or as a homodimer to a direct repeat of the core motif spaced by two nuclegotides (RevDR-2). Acts as a potent competitive repressor of ROR alpha (RORA) function and also negatively regulates the expression of NR1D1. Regulates lipid and energy homeostasis in the skeletal muscle via repression of genes involved in lipid metabolism and myogenesis including: CD36, FABP3, FABP4, UCP3, SCD1 and MSTN. Regulates hepatic lipid metabolism via the repression of APOC3. Represses gene expression at a distance in macrophages by inhibiting the transcription of enhancer-derived RNAs (eRNAs). In addition to its activity as a repressor, can also act as a transcriptional activator. Acts as a transcriptional activator of the sterol regulatory element-binding protein 1 (SREBF1) and the inflammatory mediator interleukin-6 (IL6) in the skeletal muscle. Plays a role in the regulation of circadian sleep/wake cycle; essential for maintaining wakefulness during the dark phase or active period. Key regulator of skeletal muscle mitochondrial function; negatively regulates the skeletal muscle expression of core clock genes and genes involved in mitochondrial biogenesis, fatty acid beta-oxidation and lipid metabolism. May play a role in the circadian control of neutrophilic inflammation in the lung. The sequence is that of Nuclear receptor subfamily 1 group D member 2 from Rattus norvegicus (Rat).